A 583-amino-acid polypeptide reads, in one-letter code: Chromosomal replication initiator protein DnaA (583 aa).

The domain I, interacts with DnaA modulators stretch occupies residues 1 to 91; sequence MSNSNFSIEE…KHVLKTRLDL (91 aa). Residues 91–241 form a domain II region; the sequence is LSVSLAITST…SFNDGLDGES (151 aa). The disordered stretch occupies residues 151–239; that stretch reads KAEQRDGASQ…SSSFNDGLDG (89 aa). A compositionally biased stretch (basic and acidic residues) spans 172-182; it reads EAARRREHDAD. The tract at residues 242 to 458 is domain III, AAA+ region; that stretch reads LLNKNYTFEN…GALIRVTAYC (217 aa). Residues glycine 286, glycine 288, lysine 289, and threonine 290 each contribute to the ATP site. Residues 459–583 are domain IV, binds dsDNA; the sequence is ALSHEPLTVE…TQKIKSHARD (125 aa).

Belongs to the DnaA family. Oligomerizes as a right-handed, spiral filament on DNA at oriC.

Its subcellular location is the cytoplasm. Plays an essential role in the initiation and regulation of chromosomal replication. ATP-DnaA binds to the origin of replication (oriC) to initiate formation of the DNA replication initiation complex once per cell cycle. Binds the DnaA box (a 9 base pair repeat at the origin) and separates the double-stranded (ds)DNA. Forms a right-handed helical filament on oriC DNA; dsDNA binds to the exterior of the filament while single-stranded (ss)DNA is stabiized in the filament's interior. The ATP-DnaA-oriC complex binds and stabilizes one strand of the AT-rich DNA unwinding element (DUE), permitting loading of DNA polymerase. After initiation quickly degrades to an ADP-DnaA complex that is not apt for DNA replication. Binds acidic phospholipids. This is Chromosomal replication initiator protein DnaA from Corynebacterium jeikeium (strain K411).